A 267-amino-acid polypeptide reads, in one-letter code: Probable 6-oxopurine nucleoside phosphorylase (267 aa).

Residues serine 10, 50–51 (RH), and 83–84 (SA) each bind phosphate. Methionine 188 serves as a coordination point for substrate. Threonine 189 lines the phosphate pocket. 212–214 (NYA) contributes to the substrate binding site.

It belongs to the PNP/MTAP phosphorylase family. MTAP subfamily. Homohexamer. Dimer of a homotrimer.

The enzyme catalyses a purine D-ribonucleoside + phosphate = a purine nucleobase + alpha-D-ribose 1-phosphate. It carries out the reaction guanosine + phosphate = alpha-D-ribose 1-phosphate + guanine. The catalysed reaction is inosine + phosphate = alpha-D-ribose 1-phosphate + hypoxanthine. The protein operates within purine metabolism; purine nucleoside salvage. Its function is as follows. Purine nucleoside phosphorylase which is highly specific for 6-oxopurine nucleosides. Cleaves guanosine or inosine to respective bases and sugar-1-phosphate molecules. Involved in purine salvage. The sequence is that of Probable 6-oxopurine nucleoside phosphorylase from Thermococcus kodakarensis (strain ATCC BAA-918 / JCM 12380 / KOD1) (Pyrococcus kodakaraensis (strain KOD1)).